We begin with the raw amino-acid sequence, 277 residues long: MEMO1 family protein TRQ2_0860 (277 aa).

This sequence belongs to the MEMO1 family.

This Thermotoga sp. (strain RQ2) protein is MEMO1 family protein TRQ2_0860.